The chain runs to 177 residues: Thymidine kinase (177 aa).

Residue 11–18 (GPMFSGKS) participates in ATP binding. Residue glutamate 83 is the Proton acceptor of the active site. Substrate is bound at residue phenylalanine 113. Residues cysteine 138 and cysteine 141 each contribute to the Zn(2+) site. Residue 157 to 161 (IEIIG) participates in substrate binding. Zn(2+) is bound by residues cysteine 170 and cysteine 173.

It belongs to the thymidine kinase family. Homotetramer. Two molecules of substrate bind to each enzyme tetramer.

It carries out the reaction thymidine + ATP = dTMP + ADP + H(+). Its function is as follows. Phosphorylates thymidine and thymidine analogs, such as azidothymidine (AZT). Part of the salvage pathway for pyrimidine deoxyribonucleotide synthesis. The sequence is that of Thymidine kinase (OPG101) from Cynomys gunnisoni (Gunnison's prairie dog).